A 334-amino-acid chain; its full sequence is Phosphate acyltransferase (334 aa).

It belongs to the PlsX family. In terms of assembly, homodimer. Probably interacts with PlsY.

Its subcellular location is the cytoplasm. It catalyses the reaction a fatty acyl-[ACP] + phosphate = an acyl phosphate + holo-[ACP]. It functions in the pathway lipid metabolism; phospholipid metabolism. Catalyzes the reversible formation of acyl-phosphate (acyl-PO(4)) from acyl-[acyl-carrier-protein] (acyl-ACP). This enzyme utilizes acyl-ACP as fatty acyl donor, but not acyl-CoA. The chain is Phosphate acyltransferase from Clostridium tetani (strain Massachusetts / E88).